The sequence spans 601 residues: Protein CT_858 (601 aa).

The protein belongs to the chlamydial CPn_1016/CT_858/TC_0248 family.

The chain is Protein CT_858 from Chlamydia trachomatis serovar D (strain ATCC VR-885 / DSM 19411 / UW-3/Cx).